The chain runs to 169 residues: Proepiregulin (169 aa).

The signal sequence occupies residues 1–29 (MTAGRRMEMLCAGRVPALLLCLGFHLLQA). A propeptide spanning residues 30–62 (VLSTTVIPSCIPGESSDNCTALVQTEDNPRVAQ) is cleaved from the precursor. N-linked (GlcNAc...) asparagine glycosylation is present at Asn-47. At 60–119 (VAQVSITKCSSDMNGYCLHGQCIYLVDMSQNYCRCEVGYTGVRCEHFFLTVHQPLSKEYV) the chain is on the extracellular side. Residues 64–104 (SITKCSSDMNGYCLHGQCIYLVDMSQNYCRCEVGYTGVRCE) enclose the EGF-like domain. 3 disulfide bridges follow: Cys-68–Cys-81, Cys-76–Cys-92, and Cys-94–Cys-103. The propeptide at 109 to 169 (TVHQPLSKEY…TSGDPELPQV (61 aa)) is removed in mature form. The helical transmembrane segment at 120 to 140 (ALTVILIILFLITVVGSTYYF) threads the bilayer. The Cytoplasmic segment spans residues 141–169 (CRWYRNRKSKEPKKEYERVTSGDPELPQV).

As to quaternary structure, interacts with EGFR and ERBB4. As to expression, in normal adults, expressed predominantly in the placenta and peripheral blood leukocytes. High levels were detected in carcinomas of the bladder, lung, kidney and colon.

It is found in the secreted. Its subcellular location is the extracellular space. The protein localises to the cell membrane. Its function is as follows. Ligand of the EGF receptor/EGFR and ERBB4. Stimulates EGFR and ERBB4 tyrosine phosphorylation. Contributes to inflammation, wound healing, tissue repair, and oocyte maturation by regulating angiogenesis and vascular remodeling and by stimulating cell proliferation. In Homo sapiens (Human), this protein is Proepiregulin (EREG).